The sequence spans 164 residues: Endoribonuclease YbeY (164 aa).

Positions 111, 115, and 121 each coordinate Zn(2+). The segment at 142–164 is disordered; sequence GYPDPYADDETETSPTVTTKDSE. Over residues 154-164 the composition is skewed to polar residues; sequence TSPTVTTKDSE.

Belongs to the endoribonuclease YbeY family. Zn(2+) is required as a cofactor.

Its subcellular location is the cytoplasm. In terms of biological role, single strand-specific metallo-endoribonuclease involved in late-stage 70S ribosome quality control and in maturation of the 3' terminus of the 16S rRNA. The protein is Endoribonuclease YbeY of Pseudomonas fluorescens (strain Pf0-1).